A 203-amino-acid chain; its full sequence is uncharacterized protein (203 aa).

Helical transmembrane passes span 9-29, 42-62, 86-106, and 126-146; these read YNVF…IVVA, FLFL…FFDV, SGVF…ALLV, and YPLL…SIGL. Composition is skewed to basic and acidic residues over residues 164–174 and 182–191; these read GEPTAADKTDS and DQTKSKKDGD. The disordered stretch occupies residues 164–203; it reads GEPTAADKTDSRPVVVDLDQTKSKKDGDNPPQASGDMTSL. Polar residues predominate over residues 194–203; sequence PQASGDMTSL.

Its subcellular location is the cell membrane. This is an uncharacterized protein from Mycoplasma pneumoniae (strain ATCC 29342 / M129 / Subtype 1) (Mycoplasmoides pneumoniae).